A 548-amino-acid chain; its full sequence is Glucose-6-phosphate isomerase 1 (548 aa).

Glutamate 353 acts as the Proton donor in catalysis. Catalysis depends on residues histidine 384 and lysine 512.

It belongs to the GPI family.

The protein resides in the cytoplasm. It catalyses the reaction alpha-D-glucose 6-phosphate = beta-D-fructose 6-phosphate. It functions in the pathway carbohydrate biosynthesis; gluconeogenesis. The protein operates within carbohydrate degradation; glycolysis; D-glyceraldehyde 3-phosphate and glycerone phosphate from D-glucose: step 2/4. In terms of biological role, catalyzes the reversible isomerization of glucose-6-phosphate to fructose-6-phosphate. The protein is Glucose-6-phosphate isomerase 1 of Neisseria gonorrhoeae (strain ATCC 700825 / FA 1090).